The following is a 151-amino-acid chain: Large ribosomal subunit protein uL22 (151 aa).

Polar residues predominate over residues 1 to 18 (MARINYSINGDPETTSKA). Positions 1 to 23 (MARINYSINGDPETTSKAMGSEL) are disordered.

This sequence belongs to the universal ribosomal protein uL22 family. In terms of assembly, part of the 50S ribosomal subunit.

Its function is as follows. This protein binds specifically to 23S rRNA. It makes multiple contacts with different domains of the 23S rRNA in the assembled 50S subunit and ribosome. The globular domain of the protein is located near the polypeptide exit tunnel on the outside of the subunit, while an extended beta-hairpin is found that lines the wall of the exit tunnel in the center of the 70S ribosome. The sequence is that of Large ribosomal subunit protein uL22 from Methanosarcina acetivorans (strain ATCC 35395 / DSM 2834 / JCM 12185 / C2A).